Here is a 335-residue protein sequence, read N- to C-terminus: MITSQTPITVLGAGSYGTALAITFSRNGSPTHLWGHNPAHIAQMQTERQNYRFLPDVIFPEDLHLESNLAQAMEYSQDILIVVPSHAFGEILIKIKPHLKAHHRLIWATKGLERNTGRLLQTVVEEQLGTQYPLAVLSGPTFAKELAQGLPSAITLAANNEQFAREFQSRIHCSKGFRVYINSDMTGVQLGGAIKNVIAIGAGISDGMGFGANARTALITRGIAEITRLGISLGANTNTFMGMSGLGDLVLTCTDNQSRNRRFGLMLGKGLDAQMAMENIGQVVEGFYNTKEAYLLAQRQGVEMPITEQIYQMLFCGKSAQDVAISLLGRACKGE.

NADPH contacts are provided by Ser15, Tyr16, His36, and Lys110. Residues Lys110, Gly139, and Thr141 each coordinate sn-glycerol 3-phosphate. Position 143 (Ala143) interacts with NADPH. Sn-glycerol 3-phosphate is bound by residues Lys195, Asp248, Ser258, Arg259, and Asn260. Residue Lys195 is the Proton acceptor of the active site. Residue Arg259 coordinates NADPH. Residues Val283 and Glu285 each coordinate NADPH.

Belongs to the NAD-dependent glycerol-3-phosphate dehydrogenase family.

It is found in the cytoplasm. It carries out the reaction sn-glycerol 3-phosphate + NAD(+) = dihydroxyacetone phosphate + NADH + H(+). The enzyme catalyses sn-glycerol 3-phosphate + NADP(+) = dihydroxyacetone phosphate + NADPH + H(+). The protein operates within membrane lipid metabolism; glycerophospholipid metabolism. Functionally, catalyzes the reduction of the glycolytic intermediate dihydroxyacetone phosphate (DHAP) to sn-glycerol 3-phosphate (G3P), the key precursor for phospholipid synthesis. The protein is Glycerol-3-phosphate dehydrogenase [NAD(P)+] of Haemophilus influenzae (strain ATCC 51907 / DSM 11121 / KW20 / Rd).